The sequence spans 155 residues: Archaemetzincin (155 aa).

Histidine 109 provides a ligand contact to Zn(2+). Residue glutamate 110 is the Proton acceptor of the active site. Histidine 113, histidine 119, cysteine 120, cysteine 125, cysteine 144, and cysteine 147 together coordinate Zn(2+).

Belongs to the peptidase M54 family. As to quaternary structure, monomer. Zn(2+) is required as a cofactor.

Probable zinc metalloprotease whose natural substrate is unknown. This chain is Archaemetzincin, found in Pyrobaculum aerophilum (strain ATCC 51768 / DSM 7523 / JCM 9630 / CIP 104966 / NBRC 100827 / IM2).